A 107-amino-acid chain; its full sequence is UPF0473 protein Ldb1604 (107 aa).

This sequence belongs to the UPF0473 family.

This Lactobacillus delbrueckii subsp. bulgaricus (strain ATCC 11842 / DSM 20081 / BCRC 10696 / JCM 1002 / NBRC 13953 / NCIMB 11778 / NCTC 12712 / WDCM 00102 / Lb 14) protein is UPF0473 protein Ldb1604.